Reading from the N-terminus, the 345-residue chain is Protease HtpX homolog (345 aa).

Transmembrane regions (helical) follow at residues 6 to 26 (TAML…LVGG) and 27 to 47 (SNGM…SYWN). His130 lines the Zn(2+) pocket. Residue Glu131 is part of the active site. His134 is a binding site for Zn(2+). A run of 2 helical transmembrane segments spans residues 145–165 (LTAT…FMGG) and 179–199 (IGGL…QMAI). Glu204 is a Zn(2+) binding site.

It belongs to the peptidase M48B family. The cofactor is Zn(2+).

The protein resides in the cell inner membrane. The sequence is that of Protease HtpX homolog from Bartonella henselae (strain ATCC 49882 / DSM 28221 / CCUG 30454 / Houston 1) (Rochalimaea henselae).